Reading from the N-terminus, the 309-residue chain is MDIQFLGTGAGQPSKARNVSSLALKLLDEINEVWLFDCGEGTQNRILETTIRPRKVSKIFITHLHGDHIFGLPGFLSSRAFQANEEQTDLEIYGPQGIKSFVLTSLRVSGSRLPYRIHFHEFDQDSLGKILETDKFTVYAEELDHTIFCVGYRVMQKDLEGTLDAEKLKAAGVPFGPLFGKIKNGQDLVLEDGTEIKAADYISAPRPGKIITILGDTRKTDASVRLAVNADVLVHESTYGKGDEKIARNHGHSTNMQAAQVAVEAGAKRLLLNHISARFLSKDISKLKKDAATIFENVHVVKDLEEVEI.

7 residues coordinate Zn(2+): His-63, His-65, Asp-67, His-68, His-145, Asp-216, and His-274. Catalysis depends on Asp-67, which acts as the Proton acceptor.

This sequence belongs to the RNase Z family. In terms of assembly, homodimer. Zn(2+) serves as cofactor.

It catalyses the reaction Endonucleolytic cleavage of RNA, removing extra 3' nucleotides from tRNA precursor, generating 3' termini of tRNAs. A 3'-hydroxy group is left at the tRNA terminus and a 5'-phosphoryl group is left at the trailer molecule.. Its function is as follows. Zinc phosphodiesterase, which displays some tRNA 3'-processing endonuclease activity. Probably involved in tRNA maturation, by removing a 3'-trailer from precursor tRNA. The sequence is that of Ribonuclease Z from Streptococcus pneumoniae (strain 70585).